A 515-amino-acid chain; its full sequence is MSQVELPLIDYAAITPILVILGAACLGVLVEAFLPRHQRWSAQVGLSLLALVAAGVALALHARQGGTGVTTLSDSLAIDAPTLFLWGTLLALGLGAILLIADRSVESGGAFVAESNDTGPAGAGEMTRATAAVAGMRTEVFPLALFALGGMMVFCAANDLLTMFIALEVLSLPLYLMCGLAKRRRLLSQEAAVKYFLLGAFASAFFLYGLALLYGYAGSVKLSAIAAATAGTDRSDTLLFAGLGLLVVGLLFKASVGPFHTWTPDVYQGAPTAVTGFMAACTKVAAFGGILRVLQVAFEASSWEWRGVLYAVAIVSMAIGVVLGLTQSDIKRMIAYSSVAHAGFLLVGSIALTERGLAGTMFYLLAYGFTTIAIFGVISLVRTSDGEATHLSDWAGLAKRSPVVAWVFTFLLLALAGIPMTSGFVGKFVVFEAALADGMAPLVVVALVASAVAAFFYLRVIVLMHFSEPAEDGPTVSVPGAFTTAAITLGVVVTLLLGVLPSLALDWANLGGFVS.

14 helical membrane-spanning segments follow: residues 14 to 34 (ITPI…EAFL), 40 to 60 (WSAQ…ALAL), 80 to 100 (APTL…ILLI), 138 to 158 (TEVF…CAAN), 160 to 180 (LLTM…MCGL), 195 to 215 (YFLL…LLYG), 239 to 259 (LFAG…VGPF), 271 to 291 (PTAV…GGIL), 307 to 327 (GVLY…GLTQ), 333 to 353 (MIAY…IALT), 361 to 381 (MFYL…ISLV), 404 to 424 (VAWV…TSGF), 438 to 458 (GMAP…FFYL), and 485 to 505 (AAIT…SLAL).

It belongs to the complex I subunit 2 family. NDH-1 is composed of 14 different subunits. Subunits NuoA, H, J, K, L, M, N constitute the membrane sector of the complex.

It localises to the cell membrane. The catalysed reaction is a quinone + NADH + 5 H(+)(in) = a quinol + NAD(+) + 4 H(+)(out). NDH-1 shuttles electrons from NADH, via FMN and iron-sulfur (Fe-S) centers, to quinones in the respiratory chain. The immediate electron acceptor for the enzyme in this species is believed to be a menaquinone. Couples the redox reaction to proton translocation (for every two electrons transferred, four hydrogen ions are translocated across the cytoplasmic membrane), and thus conserves the redox energy in a proton gradient. This Saccharopolyspora erythraea (strain ATCC 11635 / DSM 40517 / JCM 4748 / NBRC 13426 / NCIMB 8594 / NRRL 2338) protein is NADH-quinone oxidoreductase subunit N.